The primary structure comprises 214 residues: Cytochrome c biogenesis ATP-binding export protein CcmA (214 aa).

Positions 16–212 constitute an ABC transporter domain; that stretch reads LRVSGLSLSR…PDAKRIDLGA (197 aa). 48-55 lines the ATP pocket; the sequence is GPNGTGKT.

The protein belongs to the ABC transporter superfamily. CcmA exporter (TC 3.A.1.107) family. The complex is composed of two ATP-binding proteins (CcmA) and two transmembrane proteins (CcmB).

It localises to the cell inner membrane. The catalysed reaction is heme b(in) + ATP + H2O = heme b(out) + ADP + phosphate + H(+). Its function is as follows. Part of the ABC transporter complex CcmAB involved in the biogenesis of c-type cytochromes; once thought to export heme, this seems not to be the case, but its exact role is uncertain. Responsible for energy coupling to the transport system. The chain is Cytochrome c biogenesis ATP-binding export protein CcmA from Maricaulis maris (strain MCS10) (Caulobacter maris).